Reading from the N-terminus, the 426-residue chain is Glutamate-1-semialdehyde 2,1-aminomutase (426 aa).

Lysine 265 bears the N6-(pyridoxal phosphate)lysine mark.

Belongs to the class-III pyridoxal-phosphate-dependent aminotransferase family. HemL subfamily. In terms of assembly, homodimer. It depends on pyridoxal 5'-phosphate as a cofactor.

It localises to the cytoplasm. The enzyme catalyses (S)-4-amino-5-oxopentanoate = 5-aminolevulinate. The protein operates within porphyrin-containing compound metabolism; protoporphyrin-IX biosynthesis; 5-aminolevulinate from L-glutamyl-tRNA(Glu): step 2/2. The chain is Glutamate-1-semialdehyde 2,1-aminomutase from Akkermansia muciniphila (strain ATCC BAA-835 / DSM 22959 / JCM 33894 / BCRC 81048 / CCUG 64013 / CIP 107961 / Muc).